A 497-amino-acid polypeptide reads, in one-letter code: Membrane-bound lytic murein transglycosylase F (497 aa).

The N-terminal stretch at 1–29 is a signal peptide; the sequence is MFFRPDFRPRCAKWLIATGLFLMLGACVE. The non-LT domain stretch occupies residues 30-267; that stretch reads KPTTLERVKE…RLKDRYYGHV (238 aa). The LT domain stretch occupies residues 268-497; the sequence is DVLGYVGAYT…PASSPEKPAL (230 aa). Glu314 is a catalytic residue. A disordered region spans residues 464-497; it reads VADGNLHVPGVDKTQPPAPTAPVVPASSPEKPAL. Residues 486 to 497 are compositionally biased toward low complexity; it reads VVPASSPEKPAL.

The protein in the N-terminal section; belongs to the bacterial solute-binding protein 3 family. It in the C-terminal section; belongs to the transglycosylase Slt family.

The protein resides in the cell outer membrane. It carries out the reaction Exolytic cleavage of the (1-&gt;4)-beta-glycosidic linkage between N-acetylmuramic acid (MurNAc) and N-acetylglucosamine (GlcNAc) residues in peptidoglycan, from either the reducing or the non-reducing ends of the peptidoglycan chains, with concomitant formation of a 1,6-anhydrobond in the MurNAc residue.. In terms of biological role, murein-degrading enzyme that degrades murein glycan strands and insoluble, high-molecular weight murein sacculi, with the concomitant formation of a 1,6-anhydromuramoyl product. Lytic transglycosylases (LTs) play an integral role in the metabolism of the peptidoglycan (PG) sacculus. Their lytic action creates space within the PG sacculus to allow for its expansion as well as for the insertion of various structures such as secretion systems and flagella. This Pseudomonas syringae pv. tomato (strain ATCC BAA-871 / DC3000) protein is Membrane-bound lytic murein transglycosylase F.